The sequence spans 89 residues: Small ribosomal subunit protein uS15 (89 aa).

Belongs to the universal ribosomal protein uS15 family. As to quaternary structure, part of the 30S ribosomal subunit. Forms a bridge to the 50S subunit in the 70S ribosome, contacting the 23S rRNA.

Functionally, one of the primary rRNA binding proteins, it binds directly to 16S rRNA where it helps nucleate assembly of the platform of the 30S subunit by binding and bridging several RNA helices of the 16S rRNA. In terms of biological role, forms an intersubunit bridge (bridge B4) with the 23S rRNA of the 50S subunit in the ribosome. This is Small ribosomal subunit protein uS15 from Pseudomonas fluorescens (strain Pf0-1).